Consider the following 110-residue polypeptide: Large ribosomal subunit protein uL22 (110 aa).

It belongs to the universal ribosomal protein uL22 family. Part of the 50S ribosomal subunit.

In terms of biological role, this protein binds specifically to 23S rRNA; its binding is stimulated by other ribosomal proteins, e.g. L4, L17, and L20. It is important during the early stages of 50S assembly. It makes multiple contacts with different domains of the 23S rRNA in the assembled 50S subunit and ribosome. The globular domain of the protein is located near the polypeptide exit tunnel on the outside of the subunit, while an extended beta-hairpin is found that lines the wall of the exit tunnel in the center of the 70S ribosome. This is Large ribosomal subunit protein uL22 from Oleidesulfovibrio alaskensis (strain ATCC BAA-1058 / DSM 17464 / G20) (Desulfovibrio alaskensis).